The chain runs to 60 residues: RICYSHKASLPRATKTCVENSCYKMFIRTSPDYISDRGCGCPTAMWPYQTACCKGDRCNK.

Disulfide bonds link cysteine 3–cysteine 22, cysteine 17–cysteine 39, cysteine 41–cysteine 52, and cysteine 53–cysteine 58. An important for binding to L-type calcium channels region spans residues 41-48 (CPTAMWPY).

It belongs to the three-finger toxin family. Short-chain subfamily. L-type calcium blocker sub-subfamily. In terms of tissue distribution, expressed by the venom gland.

Its subcellular location is the secreted. This specific blocker of the L-type calcium channel (Cav1/CACNA1) is a smooth muscle relaxant and an inhibitor of cardiac contractions. The chain is Toxin C10S2C2 from Dendroaspis angusticeps (Eastern green mamba).